The chain runs to 346 residues: Nitrilase 3 (346 aa).

Residue Ser2 is modified to N-acetylserine. The 273-residue stretch at 25-297 (VRVTIVQSST…EGLVTADLDL (273 aa)) folds into the CN hydrolase domain. The Proton acceptor role is filled by Glu65. Catalysis depends on Lys152, which acts as the Proton donor. Cys186 acts as the Nucleophile in catalysis.

The protein belongs to the carbon-nitrogen hydrolase superfamily. Nitrilase family.

The protein resides in the cell membrane. It catalyses the reaction a nitrile + 2 H2O = a carboxylate + NH4(+). Can convert indole-3-acetonitrile to the plant hormone indole-3-acetic acid. In Arabidopsis thaliana (Mouse-ear cress), this protein is Nitrilase 3 (NIT3).